The following is a 396-amino-acid chain: S-adenosylmethionine synthase 3 (396 aa).

Glutamate 12 contacts Mg(2+). Position 18 (histidine 18) interacts with ATP. Residue glutamate 46 participates in K(+) binding. L-methionine is bound by residues glutamate 59 and glutamine 102. Residues 170–172 (DGK), 238–241 (SGRF), aspartate 249, 255–256 (RK), alanine 272, lysine 276, and lysine 280 contribute to the ATP site. Residue aspartate 249 participates in L-methionine binding. Residue lysine 280 participates in L-methionine binding.

The protein belongs to the AdoMet synthase family. Homotetramer. Mn(2+) is required as a cofactor. It depends on Mg(2+) as a cofactor. Co(2+) serves as cofactor. Requires K(+) as cofactor.

It is found in the cytoplasm. It carries out the reaction L-methionine + ATP + H2O = S-adenosyl-L-methionine + phosphate + diphosphate. It participates in amino-acid biosynthesis; S-adenosyl-L-methionine biosynthesis; S-adenosyl-L-methionine from L-methionine: step 1/1. Catalyzes the formation of S-adenosylmethionine from methionine and ATP. The reaction comprises two steps that are both catalyzed by the same enzyme: formation of S-adenosylmethionine (AdoMet) and triphosphate, and subsequent hydrolysis of the triphosphate. The sequence is that of S-adenosylmethionine synthase 3 (METK3) from Oryza sativa subsp. japonica (Rice).